A 440-amino-acid polypeptide reads, in one-letter code: Chromosome partition protein MukF (440 aa).

A leucine-zipper region spans residues 208 to 236 (LSETSGTLRELQDTLEAAGDKLQANLLRI).

The protein belongs to the MukF family. Interacts, and probably forms a ternary complex, with MukE and MukB via its C-terminal region. The complex formation is stimulated by calcium or magnesium. It is required for an interaction between MukE and MukB.

Its subcellular location is the cytoplasm. The protein localises to the nucleoid. Involved in chromosome condensation, segregation and cell cycle progression. May participate in facilitating chromosome segregation by condensation DNA from both sides of a centrally located replisome during cell division. Not required for mini-F plasmid partitioning. Probably acts via its interaction with MukB and MukE. Overexpression results in anucleate cells. It has a calcium binding activity. The chain is Chromosome partition protein MukF from Serratia proteamaculans (strain 568).